The sequence spans 91 residues: Protein LURE 1.6 (91 aa).

The N-terminal stretch at 1-20 (MKLPFIFLITLLIFVSSCTS) is a signal peptide. 3 disulfides stabilise this stretch: Cys-59-Cys-76, Cys-62-Cys-83, and Cys-66-Cys-85.

It belongs to the DEFL family. In terms of tissue distribution, expressed in the pistil. Detected in the synergid cells.

Its subcellular location is the secreted. Functionally, pollen tube attractants guiding pollen tubes to the ovular micropyle. This is Protein LURE 1.6 from Arabidopsis thaliana (Mouse-ear cress).